The chain runs to 84 residues: UPF0297 protein NT01CX_2279 (84 aa).

This sequence belongs to the UPF0297 family.

The sequence is that of UPF0297 protein NT01CX_2279 from Clostridium novyi (strain NT).